Here is a 446-residue protein sequence, read N- to C-terminus: Low-affinity gluconate transporter (446 aa).

A topological domain (cytoplasmic) is located at residue M1. The chain crosses the membrane as a helical span at residues 2 to 22 (TTLTLVLTAVGSVLLLLFLVM). The Periplasmic segment spans residues 23-26 (KARM). The helical transmembrane segment at 27-47 (HAFLALMVVSMGAGLFSGMPL) threads the bilayer. The Cytoplasmic segment spans residues 48-58 (DKIAATMEKGM). Residues 59-79 (GGTLGFLAVVVALGAMFGKIL) traverse the membrane as a helical segment. Over 80 to 109 (HETGAVDQIAVKMLKSFGHSRAHYAIGLAG) the chain is Periplasmic. Residues 110–130 (LVCALPLFFEVAIVLLISVAF) traverse the membrane as a helical segment. Residues 131–142 (SMARHTGTNLVK) lie on the Cytoplasmic side of the membrane. Residues 143–163 (LVIPLFAGVAAAAAFLVPGPA) traverse the membrane as a helical segment. Residues 164–176 (PMLLASQMNADFG) are Periplasmic-facing. A helical membrane pass occupies residues 177-197 (WMILIGLCAAIPGMIIAGPLW). Topologically, residues 198–225 (GNFISRYVELHIPDDISEPHLGEGKMPS) are cytoplasmic. Residues 226-246 (FGFSLSLILLPLVLVGLKTIA) traverse the membrane as a helical segment. Topologically, residues 247-261 (ARFVPEGSTAYEWFE) are periplasmic. Residues 262–282 (FIGHPFTAILVACLVAIYGLA) traverse the membrane as a helical segment. Residues 283–294 (MRQGMPKDKVME) lie on the Cytoplasmic side of the membrane. The chain crosses the membrane as a helical span at residues 295–315 (ICGHALQPAGIILLVIGAGGV). Residues 316–330 (FKQVLVDSGVGPALG) lie on the Periplasmic side of the membrane. A helical transmembrane segment spans residues 331 to 351 (EALTGMGLPIAITCFVLAAAV). R352 is a topological domain (cytoplasmic). Residues 353–373 (IIQGSATVACLTAVGLVMPVI) traverse the membrane as a helical segment. Topologically, residues 374 to 387 (EQLNYSGAQMAALS) are periplasmic. Residues 388-408 (ICIAGGSIVVSHVNDAGFWLF) traverse the membrane as a helical segment. Topologically, residues 409–424 (GKFTGATEAETLKTWT) are cytoplasmic. Residues 425 to 445 (MMETILGTVGAIVGMIAFQLL) form a helical membrane-spanning segment. Position 446 (S446) is a topological domain, periplasmic.

It belongs to the GntP permease family.

It localises to the cell inner membrane. Part of the gluconate utilization system Gnt-I; low-affinity intake of gluconate. In Escherichia coli O157:H7, this protein is Low-affinity gluconate transporter (gntU).